The primary structure comprises 470 residues: Cytochrome P450 monooxygenase FUM2 (470 aa).

Cysteine 414 contributes to the heme binding site.

Belongs to the cytochrome P450 family. The cofactor is heme.

It participates in mycotoxin biosynthesis. In terms of biological role, cytochrome P450 monooxygenase; part of the gene cluster that mediates the biosynthesis of fumonisins B1 (FB1), B2 (FB2), B3 (FB3), and B4 (FB4), which are carcinogenic mycotoxins. Within the pathway, FUM2 performs the C-10 hydroxylation present in FB2 and FB4 and which occurs early in the biosynthesis. The biosynthesis starts with the FUM1-catalyzed carbon chain assembly from one molecule of acetyl-CoA, eight molecules of malonyl-CoA, and two molecules of methionine (in S-adenosyl form). The C18 polyketide chain is released from the enzyme by a nucleophilic attack of a carbanion, which is derived from R-carbon of alanine by decarboxylation, on the carbonyl carbon of polyketide acyl chain. This step is catalyzed by the pyridoxal 5'-phosphate-dependent aminoacyl transferase FUM8. The resultant 3-keto intermediate is then stereospecifically reduced to a 3-hydroxyl product by reductase FUM13. Subsequent oxidations at C-10 by the cytochrome P450 monooxygenase FUM2, C-14 and C-15 by FUM6, FUM12 or FUM15, tricarballylic esterification of the hydroxyl groups on C-14 and C-15 by acyltransferase FUM14, and C-5 hydroxylation by 2-keto-glutarate-dependent dioxygenase FUM3 furnish the biosynthesis of fumonisins. The tricarballylic moieties are most likely derived from the citric acid cycle, and their addition to the carbon backbone may involve FUM7, FUM10, FUM11 and FUM14. The protein is Cytochrome P450 monooxygenase FUM2 of Gibberella moniliformis (strain M3125 / FGSC 7600) (Maize ear and stalk rot fungus).